We begin with the raw amino-acid sequence, 156 residues long: Cellulose synthase operon protein D (156 aa).

It participates in glycan metabolism; bacterial cellulose biosynthesis. May have a major role in the perfection of crystallization, involved either in the pore structure itself or in the organization of the pores within the linear array of terminal synthesizing complexes (TCs). This Komagataeibacter xylinus (Gluconacetobacter xylinus) protein is Cellulose synthase operon protein D.